A 94-amino-acid chain; its full sequence is Protein SKIP34 (94 aa).

The interval 1 to 27 is disordered; sequence MCYGHNQSLSSRSSLRRRSHDGEDDSV. The stretch at 23–61 forms a coiled coil; it reads EDDSVVDDLRDRLAETEARLRRARAREAELSRRLEHMKR.

As to quaternary structure, interacts with SPK1B/ASK2.

This Arabidopsis thaliana (Mouse-ear cress) protein is Protein SKIP34 (SKIP34).